The following is an 874-amino-acid chain: Probable inorganic carbon transporter subunit DabA (874 aa).

Zn(2+) contacts are provided by Cys-398, Asp-400, His-580, and Cys-595.

The protein belongs to the inorganic carbon transporter (TC 9.A.2) DabA family. As to quaternary structure, forms a complex with DabB. Requires Zn(2+) as cofactor.

It is found in the cell membrane. Functionally, part of an energy-coupled inorganic carbon pump. The protein is Probable inorganic carbon transporter subunit DabA of Bacillus cereus (strain AH187).